The chain runs to 555 residues: E3 ubiquitin-protein ligase ARIH1 (555 aa).

Residues 1–47 (MDSDEGYNYEFDEDEECSEEDSGAEEEEDDDEDEPDDDNLDLGEVEL) are compositionally biased toward acidic residues. Positions 1 to 93 (MDSDEGYNYE…GGGGGPGHEQ (93 aa)) are disordered. Gly residues predominate over residues 65-90 (ETGGGGGSALGPGGGGGGGGGGGGPG). A UBA-like region spans residues 103–151 (TAEQILQHMVECIREVNEVIQNPATITRILLSHFNWDKEKLMERYFDGN). Lysine 140 is subject to N6-acetyllysine. The segment at 180–391 (QDMPCQICYL…SAWYNCNRYN (212 aa)) is TRIAD supradomain. Zn(2+) is bound by residues cysteine 184, cysteine 187, cysteine 201, histidine 203, cysteine 206, cysteine 209, cysteine 229, cysteine 234, cysteine 274, cysteine 279, cysteine 295, cysteine 297, cysteine 302, cysteine 305, histidine 310, cysteine 315, cysteine 342, and cysteine 345. Residues 184–234 (CQICYLNYPNSYFTGLECGHKFCMQCWSEYLTTKIMEEGMGQTISCPAHGC) form an RING-type 1 zinc finger. The IBR-type zinc finger occupies 254–315 (LKYQHLITNS…GENWHDPVKC (62 aa)). An RING-type 2; atypical zinc finger spans residues 342–373 (CPKCHVTIEKDGGCNHMVCRNQNCKAEFCWVC). The active site involves cysteine 355. Residues cysteine 360, cysteine 365, cysteine 370, cysteine 373, histidine 380, and cysteine 387 each coordinate Zn(2+). The tract at residues 406–555 (RAALQRYLFY…EKDLWEYIED (150 aa)) is ariadne domain.

Belongs to the RBR family. Ariadne subfamily. Interacts (via the first RING-type zinc finger) with UBE2L3. Associates with cullin-RING ubiquitin ligase (CRL) complexes containing CUL1, CUL2 and CUL3. Interacts with neddylated CUL1. Interacts with neddylated CUL2. Interacts with neddylated CUL3. Interacts with neddylated CUL4A. In terms of tissue distribution, widely expressed.

It is found in the cytoplasm. The protein resides in the nucleus. The protein localises to the cajal body. It carries out the reaction [E2 ubiquitin-conjugating enzyme]-S-ubiquitinyl-L-cysteine + [acceptor protein]-L-lysine = [E2 ubiquitin-conjugating enzyme]-L-cysteine + [acceptor protein]-N(6)-ubiquitinyl-L-lysine.. Its pathway is protein modification; protein ubiquitination. With respect to regulation, autoinhibited by the ariadne domain, which masks the second RING-type zinc finger that contains the active site and inhibits the E3 activity. Inhibition is relieved upon binding to neddylated cullin-RING ubiquitin ligase complexes, which activate the E3 ligase activity of ARIH1. In terms of biological role, E3 ubiquitin-protein ligase, which catalyzes ubiquitination of target proteins together with ubiquitin-conjugating enzyme E2 UBE2L3. Acts as an atypical E3 ubiquitin-protein ligase by working together with cullin-RING ubiquitin ligase (CRL) complexes and initiating ubiquitination of CRL substrates: associates with CRL complexes and specifically mediates addition of the first ubiquitin on CRLs targets. The initial ubiquitin is then elongated by CDC34/UBE2R1 and UBE2R2. E3 ubiquitin-protein ligase activity is activated upon binding to neddylated cullin-RING ubiquitin ligase complexes. Plays a role in protein translation in response to DNA damage by mediating ubiquitination of EIF4E2, the consequences of EIF4E2 ubiquitination are however unclear. According to a report, EIF4E2 ubiquitination leads to promote EIF4E2 cap-binding and protein translation arrest. According to another report EIF4E2 ubiquitination leads to its subsequent degradation. Acts as the ligase involved in ISGylation of EIF4E2. In vitro, controls the degradation of the LINC (LInker of Nucleoskeleton and Cytoskeleton) complex member SUN2 and may therefore have a role in the formation and localization of the LINC complex, and as a consequence, may act in nuclear subcellular localization and nuclear morphology. In Mus musculus (Mouse), this protein is E3 ubiquitin-protein ligase ARIH1 (Arih1).